The chain runs to 264 residues: Putative HTH-type transcriptional regulator TrmBL2 (264 aa).

Residues 33–54 constitute a DNA-binding region (H-T-H motif); sequence LTPAELASVSEVPAPRTYDVLR.

It belongs to the transcriptional regulator TrmB family.

Binds to the maltodextrin transport gene cluster (mdxE operon) promoter and to some other TGM (Thermococcales-Glycolytic-Motif) sequences, but not exclusively. The sequence is that of Putative HTH-type transcriptional regulator TrmBL2 (trmBL2) from Pyrococcus furiosus (strain ATCC 43587 / DSM 3638 / JCM 8422 / Vc1).